The sequence spans 430 residues: GTPase Obg (430 aa).

The Obg domain occupies 1-158 (MFVDQVKISL…LDVSLELKLL (158 aa)). The disordered stretch occupies residues 118–145 (KGGRGGRGNSRFATPRNPAPDFSEKGEP). The OBG-type G domain occupies 159 to 329 (ADVGLVGFPS…LLYAIADKLE (171 aa)). GTP-binding positions include 165–172 (GFPSVGKS), 190–194 (FTTIK), 212–215 (DLPG), 282–285 (NKMD), and 310–312 (STI). Ser172 and Thr192 together coordinate Mg(2+). Residues 352–430 (KHTPSQDKFT…ILGGEFEFVE (79 aa)) enclose the OCT domain.

The protein belongs to the TRAFAC class OBG-HflX-like GTPase superfamily. OBG GTPase family. As to quaternary structure, monomer. Mg(2+) is required as a cofactor.

Its subcellular location is the cytoplasm. Its function is as follows. An essential GTPase which binds GTP, GDP and possibly (p)ppGpp with moderate affinity, with high nucleotide exchange rates and a fairly low GTP hydrolysis rate. Plays a role in control of the cell cycle, stress response, ribosome biogenesis and in those bacteria that undergo differentiation, in morphogenesis control. In Staphylococcus aureus (strain MRSA252), this protein is GTPase Obg.